Here is a 225-residue protein sequence, read N- to C-terminus: Ribonuclease T (225 aa).

The segment at 1 to 21 (MSEDHFDEEHEGHGGGGGSRH) is disordered. In terms of domain architecture, Exonuclease spans 33–207 (VVVDVETGGF…YDTEKTAELF (175 aa)). Residues aspartate 36, glutamate 38, histidine 194, and aspartate 199 each coordinate Mg(2+). The active-site Proton donor/acceptor is histidine 194.

Belongs to the RNase T family. In terms of assembly, homodimer. Mg(2+) is required as a cofactor.

Its function is as follows. Trims short 3' overhangs of a variety of RNA species, leaving a one or two nucleotide 3' overhang. Responsible for the end-turnover of tRNA: specifically removes the terminal AMP residue from uncharged tRNA (tRNA-C-C-A). Also appears to be involved in tRNA biosynthesis. In Pseudomonas syringae pv. tomato (strain ATCC BAA-871 / DC3000), this protein is Ribonuclease T.